The primary structure comprises 130 residues: Small ribosomal subunit protein uS9 (130 aa).

Belongs to the universal ribosomal protein uS9 family.

The polypeptide is Small ribosomal subunit protein uS9 (Stutzerimonas stutzeri (strain A1501) (Pseudomonas stutzeri)).